We begin with the raw amino-acid sequence, 377 residues long: Leucine aminopeptidase A (377 aa).

Residues 1 to 18 (MRFLPCIATLAATASALA) form the signal peptide. Residues 19-79 (IGDHVRSDDQ…SNKKQKLAVT (61 aa)) constitute a propeptide that is removed on maturation. Asparagine 87 carries an N-linked (GlcNAc...) asparagine glycan. Histidine 176, aspartate 195, glutamate 234, and aspartate 261 together coordinate Zn(2+). A glycan (N-linked (GlcNAc...) asparagine) is linked at asparagine 288. The cysteines at positions 310 and 314 are disulfide-linked. Histidine 343 is a binding site for Zn(2+).

This sequence belongs to the peptidase M28 family. M28E subfamily. In terms of assembly, monomer. Zn(2+) is required as a cofactor.

It is found in the secreted. Its activity is regulated as follows. Calcium, magnesium and manganese cations reduce peptidase activity to 20.3-51.3 percent. The metal ion chelating reagent EDTA almost completely inhibits activity. The protease inhibitor bacitracin and the aminopeptidase B inhibitor bestatin, as well as DTT and beta-mercaptoethanol act also as lap A inhibitorsD. Extracellular aminopeptidase that allows assimilation of proteinaceous substrates. In Aspergillus oryzae (strain ATCC 42149 / RIB 40) (Yellow koji mold), this protein is Leucine aminopeptidase A (lapA).